The chain runs to 394 residues: Mitogen-activated protein kinase 2 (394 aa).

Positions 1–31 are enriched in gly residues; sequence MRMEGGGGGGHGHHGGGGGGHGHHGGIGGGE. Residues 1 to 33 are disordered; it reads MRMEGGGGGGHGHHGGGGGGHGHHGGIGGGEAQ. The Protein kinase domain maps to 61 to 347; sequence VPPIRPVGRG…VDEALCHPYL (287 aa). Residues 67–75 and K90 contribute to the ATP site; that span reads VGRGACGII. D187 serves as the catalytic Proton acceptor. Residue Y221 is modified to Phosphotyrosine.

It belongs to the protein kinase superfamily. CMGC Ser/Thr protein kinase family. MAP kinase subfamily. The phosphorylation on Tyr-221 activates the enzyme. A conserved Thr, which must also be phosphorylated to activate the enzyme in closely related sequences, is replaced by Met-219 in this sequence.

It carries out the reaction L-seryl-[protein] + ATP = O-phospho-L-seryl-[protein] + ADP + H(+). The enzyme catalyses L-threonyl-[protein] + ATP = O-phospho-L-threonyl-[protein] + ADP + H(+). The sequence is that of Mitogen-activated protein kinase 2 (MPK2) from Oryza sativa subsp. japonica (Rice).